The sequence spans 122 residues: Probable F-box protein At4g23960 (122 aa).

The 45-residue stretch at 1 to 45 (MIEQLFPEVTCYALRYLDYSSLCQLSMTSSSMRKTANDDVLWRAL) folds into the F-box domain.

In Arabidopsis thaliana (Mouse-ear cress), this protein is Probable F-box protein At4g23960.